The chain runs to 58 residues: UPF0391 membrane protein OCAR_5266/OCA5_c27040 (58 aa).

The next 2 membrane-spanning stretches (helical) occupy residues 4–24 and 30–50; these read WVVTFLIIALVAGLLGFGGIA and IAKIVFFIAIVLFAVSAVVGL.

This sequence belongs to the UPF0391 family.

The protein resides in the cell membrane. This Afipia carboxidovorans (strain ATCC 49405 / DSM 1227 / KCTC 32145 / OM5) (Oligotropha carboxidovorans) protein is UPF0391 membrane protein OCAR_5266/OCA5_c27040.